An 81-amino-acid chain; its full sequence is Cytotoxin 5 (81 aa).

Residues 1-21 (MKTLLLTLVVVTIVCLDLGYT) form the signal peptide. 4 disulfides stabilise this stretch: Cys-24–Cys-42, Cys-35–Cys-59, Cys-63–Cys-74, and Cys-75–Cys-80.

It belongs to the three-finger toxin family. Short-chain subfamily. Type IA cytotoxin sub-subfamily. As to quaternary structure, monomer in solution; Homodimer and oligomer in the presence of negatively charged lipids forming a pore with a size ranging between 20 and 30 Angstroms. Expressed by the venom gland.

It localises to the secreted. It is found in the target cell membrane. Functionally, shows cytolytic activity on many different cells by forming pore in lipid membranes. In vivo, increases heart rate or kills the animal by cardiac arrest. In addition, it binds to heparin with high affinity, interacts with Kv channel-interacting protein 1 (KCNIP1) in a calcium-independent manner, and binds to integrin alpha-V/beta-3 (ITGAV/ITGB3) with moderate affinity. The sequence is that of Cytotoxin 5 from Naja atra (Chinese cobra).